Consider the following 208-residue polypeptide: Cytochrome c oxidase assembly protein CtaG (208 aa).

Residues 1-19 (MPDTQPNVSPNPIRRRGLG) lie on the Cytoplasmic side of the membrane. Residues 20–42 (RDATVASICGLVVALMVGASFAA) traverse the membrane as a helical; Signal-anchor for type II membrane protein segment. Topologically, residues 43–208 (VPFYNWFCRT…TAPDKRKGNL (166 aa)) are periplasmic.

It belongs to the COX11/CtaG family.

The protein localises to the cell inner membrane. In terms of biological role, exerts its effect at some terminal stage of cytochrome c oxidase synthesis, probably by being involved in the insertion of the copper B into subunit I. This chain is Cytochrome c oxidase assembly protein CtaG, found in Rhodopseudomonas palustris (strain HaA2).